A 77-amino-acid polypeptide reads, in one-letter code: Small ribosomal subunit protein uS17 (77 aa).

Belongs to the universal ribosomal protein uS17 family. As to quaternary structure, part of the 30S ribosomal subunit.

In terms of biological role, one of the primary rRNA binding proteins, it binds specifically to the 5'-end of 16S ribosomal RNA. The protein is Small ribosomal subunit protein uS17 of Rickettsia canadensis (strain McKiel).